Here is a 348-residue protein sequence, read N- to C-terminus: uncharacterized protein (348 aa).

The span at 1-11 shows a compositional bias: pro residues; it reads MTNPQGPPNDP. The disordered stretch occupies residues 1-83; the sequence is MTNPQGPPND…RSGRQAAHQA (83 aa). Transmembrane regions (helical) follow at residues 111–131 and 235–255; these read LTVFLVLIIVFSLVLAGLIGG and IPILGAFVTSSVVTHPADGTV.

The protein resides in the cell membrane. This is an uncharacterized protein from Mycobacterium tuberculosis (strain CDC 1551 / Oshkosh).